The sequence spans 517 residues: Glutamate--cysteine ligase (517 aa).

It belongs to the glutamate--cysteine ligase type 1 family. Type 1 subfamily.

The enzyme catalyses L-cysteine + L-glutamate + ATP = gamma-L-glutamyl-L-cysteine + ADP + phosphate + H(+). Its pathway is sulfur metabolism; glutathione biosynthesis; glutathione from L-cysteine and L-glutamate: step 1/2. The protein is Glutamate--cysteine ligase of Pectobacterium atrosepticum (strain SCRI 1043 / ATCC BAA-672) (Erwinia carotovora subsp. atroseptica).